A 607-amino-acid polypeptide reads, in one-letter code: Probable LRR receptor-like serine/threonine-protein kinase At5g65240 (607 aa).

The first 24 residues, 1-24, serve as a signal peptide directing secretion; it reads MALLIITALVFSSLWSSVSPDAQG. Topologically, residues 25-219 are extracellular; it reads DALFALRSSL…SGDSSSRKTG (195 aa). N-linked (GlcNAc...) asparagine glycosylation is found at N74 and N110. LRR repeat units follow at residues 87 to 111, 112 to 135, 137 to 159, and 160 to 183; these read LTTL…IGNL, SSLT…LGNL, NLQF…LTGL, and SKLI…LFKI. N-linked (GlcNAc...) asparagine glycosylation is found at N149, N171, N187, and N192. The chain crosses the membrane as a helical span at residues 220 to 240; the sequence is IIAGVVSGIAVILLGFFFFFF. Residues 241–607 lie on the Cytoplasmic side of the membrane; the sequence is CKDKHKGYKR…QDAIELSGGR (367 aa). T281 carries the phosphothreonine modification. The Protein kinase domain maps to 284 to 568; that stretch reads FSEKNVLGQG…EGEGLAERWE (285 aa). 290–298 contributes to the ATP binding site; the sequence is LGQGGFGKV. T307 carries the post-translational modification Phosphothreonine. K312 is an ATP binding site. S365 carries the post-translational modification Phosphoserine. D411 (proton acceptor) is an active-site residue. Phosphothreonine occurs at positions 444, 445, and 450. A Phosphoserine modification is found at S460. T461 is subject to Phosphothreonine. S465 carries the phosphoserine modification. T541 carries the phosphothreonine modification.

Belongs to the protein kinase superfamily. Ser/Thr protein kinase family.

It localises to the cell membrane. The enzyme catalyses L-seryl-[protein] + ATP = O-phospho-L-seryl-[protein] + ADP + H(+). It carries out the reaction L-threonyl-[protein] + ATP = O-phospho-L-threonyl-[protein] + ADP + H(+). In Arabidopsis thaliana (Mouse-ear cress), this protein is Probable LRR receptor-like serine/threonine-protein kinase At5g65240.